We begin with the raw amino-acid sequence, 599 residues long: Aspartate--tRNA(Asp/Asn) ligase (599 aa).

Glu169 contributes to the L-aspartate binding site. The aspartate stretch occupies residues 193–196 (QLFK). An L-aspartate-binding site is contributed by Arg215. ATP-binding positions include 215–217 (RDE) and Gln224. His447 provides a ligand contact to L-aspartate. Glu481 is a binding site for ATP. Arg488 is an L-aspartate binding site. 533–536 (GWDR) provides a ligand contact to ATP.

The protein belongs to the class-II aminoacyl-tRNA synthetase family. Type 1 subfamily. As to quaternary structure, homodimer.

The protein resides in the cytoplasm. The catalysed reaction is tRNA(Asx) + L-aspartate + ATP = L-aspartyl-tRNA(Asx) + AMP + diphosphate. In terms of biological role, aspartyl-tRNA synthetase with relaxed tRNA specificity since it is able to aspartylate not only its cognate tRNA(Asp) but also tRNA(Asn). Reaction proceeds in two steps: L-aspartate is first activated by ATP to form Asp-AMP and then transferred to the acceptor end of tRNA(Asp/Asn). The sequence is that of Aspartate--tRNA(Asp/Asn) ligase from Pseudarthrobacter chlorophenolicus (strain ATCC 700700 / DSM 12829 / CIP 107037 / JCM 12360 / KCTC 9906 / NCIMB 13794 / A6) (Arthrobacter chlorophenolicus).